Reading from the N-terminus, the 451-residue chain is G-protein coupled receptor 61 (451 aa).

The segment covering 1-14 (MESSPIPQSSGNSS) has biased composition (low complexity). Residues 1–31 (MESSPIPQSSGNSSTLGRVPQTPGPSTASGV) form a disordered region. Residues 1 to 44 (MESSPIPQSSGNSSTLGRVPQTPGPSTASGVPEVGLRDVASESV) are Extracellular-facing. N-linked (GlcNAc...) asparagine glycosylation is present at Asn-12. A helical transmembrane segment spans residues 45–67 (ALFFMLLLDLTAVAGNAAVMAVI). The Cytoplasmic segment spans residues 68 to 75 (AKTPALRK). The chain crosses the membrane as a helical span at residues 76 to 98 (FVFVFHLCLVDLLAALTLMPLAM). Over 99–112 (LSSSALFDHALFGE) the chain is Extracellular. A helical transmembrane segment spans residues 113–135 (VACRLYLFLSVCFVSLAILSVSA). The Cytoplasmic portion of the chain corresponds to 136–155 (INVERYYYVVHPMRYEVRMT). Residues 156 to 178 (LGLVASVLVGVWVKALAMASVPV) traverse the membrane as a helical segment. Topologically, residues 179–206 (LGRVSWEEGAPSVPPGCSLQWSHSAYCQ) are extracellular. The helical transmembrane segment at 207 to 229 (LFVVVFAVLYFLLPLLLILVVYC) threads the bilayer. The Cytoplasmic segment spans residues 230–287 (SMFRVARVAAMQHGPLPTWMETPRQRSESLSSRSTMVTSSGAPQTTPHRTFGGGKAAV). The chain crosses the membrane as a helical span at residues 288–310 (VLLAVGGQFLLCWLPYFSFHLYV). Topologically, residues 311 to 324 (ALSAQPISTGQVES) are extracellular. A helical transmembrane segment spans residues 325–344 (VVTWIGYFCFTSNPFFYGCL). Residues 345 to 451 (NRQIRGELSK…RPAASPRLES (107 aa)) lie on the Cytoplasmic side of the membrane.

It belongs to the G-protein coupled receptor 1 family. As to quaternary structure, forms heterodimer with MTNR1B. Interacts with ARRB1 and ARRB2 in a spontaneous and agonist-independent manner; leading to the internalization of GPR61 in the endosomal compartment. In terms of tissue distribution, expressed in brain; detected in frontal and temporal lobes, occipital pole, amygdala and hippocampus. Also expressed in testis and T cells, B cells, and monocyte. Low expression in many other tissues. Widely expressed in the hippocampus (at protein level).

Its subcellular location is the cell membrane. It localises to the endosome membrane. Functionally, orphan G-protein coupled receptor. Constitutively activates the G(s)-alpha/cAMP signaling pathway. Shows a reciprocal regulatory interaction with the melatonin receptor MTNR1B most likely through receptor heteromerization. May be involved in the regulation of food intake and body weight. This chain is G-protein coupled receptor 61 (GPR61), found in Homo sapiens (Human).